A 295-amino-acid chain; its full sequence is Nucleotide-binding protein BLi03725/BL03417 (295 aa).

Residue 16–23 (GMSGAGKT) participates in ATP binding. 67 to 70 (DLRG) is a GTP binding site.

It belongs to the RapZ-like family.

Functionally, displays ATPase and GTPase activities. This is Nucleotide-binding protein BLi03725/BL03417 from Bacillus licheniformis (strain ATCC 14580 / DSM 13 / JCM 2505 / CCUG 7422 / NBRC 12200 / NCIMB 9375 / NCTC 10341 / NRRL NRS-1264 / Gibson 46).